A 64-amino-acid polypeptide reads, in one-letter code: U2-aranetoxin-Av1a (64 aa).

In terms of tissue distribution, expressed in fat body, but not in cephalothorax, silk gland, midgut.

Its function is as follows. Insecticidal toxin. In Araneus ventricosus (Orbweaver spider), this protein is U2-aranetoxin-Av1a.